The primary structure comprises 352 residues: tRNA N6-adenosine threonylcarbamoyltransferase (352 aa).

Residues H111 and H115 each contribute to the Fe cation site. Residues 133–137, D166, G179, and N275 each bind substrate; that span reads LASGG. D300 is a Fe cation binding site.

It belongs to the KAE1 / TsaD family. Requires Fe(2+) as cofactor.

Its subcellular location is the cytoplasm. The catalysed reaction is L-threonylcarbamoyladenylate + adenosine(37) in tRNA = N(6)-L-threonylcarbamoyladenosine(37) in tRNA + AMP + H(+). Required for the formation of a threonylcarbamoyl group on adenosine at position 37 (t(6)A37) in tRNAs that read codons beginning with adenine. Is involved in the transfer of the threonylcarbamoyl moiety of threonylcarbamoyl-AMP (TC-AMP) to the N6 group of A37, together with TsaE and TsaB. TsaD likely plays a direct catalytic role in this reaction. The polypeptide is tRNA N6-adenosine threonylcarbamoyltransferase (Treponema pallidum (strain Nichols)).